Here is a 116-residue protein sequence, read N- to C-terminus: Large ribosomal subunit protein bL19 (116 aa).

The protein belongs to the bacterial ribosomal protein bL19 family.

Functionally, this protein is located at the 30S-50S ribosomal subunit interface and may play a role in the structure and function of the aminoacyl-tRNA binding site. In Pseudomonas putida (strain ATCC 700007 / DSM 6899 / JCM 31910 / BCRC 17059 / LMG 24140 / F1), this protein is Large ribosomal subunit protein bL19.